We begin with the raw amino-acid sequence, 340 residues long: Phosphate acyltransferase (340 aa).

The protein belongs to the PlsX family. As to quaternary structure, homodimer. Probably interacts with PlsY.

It localises to the cytoplasm. The enzyme catalyses a fatty acyl-[ACP] + phosphate = an acyl phosphate + holo-[ACP]. It participates in lipid metabolism; phospholipid metabolism. Catalyzes the reversible formation of acyl-phosphate (acyl-PO(4)) from acyl-[acyl-carrier-protein] (acyl-ACP). This enzyme utilizes acyl-ACP as fatty acyl donor, but not acyl-CoA. This is Phosphate acyltransferase from Pseudomonas syringae pv. tomato (strain ATCC BAA-871 / DC3000).